Reading from the N-terminus, the 546-residue chain is Cytochrome P450 monooxygenase fumoB (546 aa).

A helical membrane pass occupies residues leucine 13 to tryptophan 33. The N-linked (GlcNAc...) asparagine glycan is linked to asparagine 147. Residue cysteine 488 coordinates heme.

The protein belongs to the cytochrome P450 family. Requires heme as cofactor.

It is found in the membrane. Its pathway is secondary metabolite biosynthesis. Functionally, cytochrome P450 monooxygenase; part of the gene cluster that mediates the biosynthesis of fumosorinone, a 2-pyridone alkaloid that acts as an inhibitor of protein tyrosine phosphatase 1B which is implicated asa negative regulator of insulin receptor signaling and a potential drug target for the treatment of type II diabetes and other associated metabolic syndromes. The polyketide-amino acid backbone of fumosorinone is first assembled by the PKS-NRPS hybrid fumoS. The PKS modules condense one acetyl-CoA starter unit with 7 malonyl-CoA units, programmed C-methylations occurring after the first 3 and the sixth extensions, and cycles of full reduction occurring after the first 2 extensions. Because fumoS lacks a designated enoyl reductase (ER) domain, the required activity is provided the enoyl reductase fumoC. Upon formation of the polyketide backbone on the thiotemplate, the polyketide is transferred to the NRPS module and linked to tyrosine to produce the acyltetramic acid intermediate called prefumosorinone A. The cytochrome P450 monooxygenase fumoA then probably catalyzes an unprecedented oxidative ring expansion of prefumosorinone A to form prefumosorinone B which contains the 2-pyridone core of fumosorinone. The cytochrome P450 monooxygenase fumoB might hydroxylate the nitrogen of prefumosorinone B, but not the acyltetramic acid prefumosorinone A, to form fumosorinone. The sequence is that of Cytochrome P450 monooxygenase fumoB from Cordyceps fumosorosea (strain ARSEF 2679) (Isaria fumosorosea).